Here is a 102-residue protein sequence, read N- to C-terminus: MYIDITHYLTVSALMFTIGIAGIFLNRKNVIIILMSIELILLSVNINFVAFSAFLHDLVGQIFALFVLTVAAAEAAIGLAILVVFFRNRGSIAVEDVNVMKG.

3 helical membrane-spanning segments follow: residues 5–25 (ITHYLTVSALMFTIGIAGIFL), 31–51 (IIILMSIELILLSVNINFVAF), and 66–86 (FVLTVAAAEAAIGLAILVVFF).

Belongs to the complex I subunit 4L family. As to quaternary structure, NDH-1 is composed of 14 different subunits. Subunits NuoA, H, J, K, L, M, N constitute the membrane sector of the complex.

Its subcellular location is the cell inner membrane. The enzyme catalyses a quinone + NADH + 5 H(+)(in) = a quinol + NAD(+) + 4 H(+)(out). Its function is as follows. NDH-1 shuttles electrons from NADH, via FMN and iron-sulfur (Fe-S) centers, to quinones in the respiratory chain. The immediate electron acceptor for the enzyme in this species is believed to be ubiquinone. Couples the redox reaction to proton translocation (for every two electrons transferred, four hydrogen ions are translocated across the cytoplasmic membrane), and thus conserves the redox energy in a proton gradient. This is NADH-quinone oxidoreductase subunit K from Bartonella tribocorum (strain CIP 105476 / IBS 506).